Consider the following 139-residue polypeptide: TKDKSFTCTECEESFSLKSRLIAHLLIHTGEKPFDSTKCGKGFRRNQYLKEHLSTHREDRPFVCTVCGKTYKYKHGLNTHLHSHKVNTYFPCSECRKIFSSKASLDIHLRHHTEKTFPCTECDKTFKQKKNLKRHQMIH.

C2H2-type zinc fingers lie at residues 6–28, 34–56, 62–84, 90–112, and 117–139; these read FTCT…LLIH, FDST…LSTH, FVCT…LHSH, FPCS…LRHH, and FPCT…QMIH.

Belongs to the krueppel C2H2-type zinc-finger protein family.

The protein resides in the nucleus. Functionally, may be involved in transcriptional regulation. The sequence is that of Gastrula zinc finger protein XlCGF29.1 from Xenopus laevis (African clawed frog).